The sequence spans 264 residues: Protein hob3 (264 aa).

Residues 17 to 237 (VMMKTGHVER…FDNSVREDYS (221 aa)) enclose the BAR domain. 2 coiled-coil regions span residues 25 to 65 (ERTV…AMTA) and 165 to 187 (RTEK…LVSE).

It is found in the cytoplasm. The protein resides in the cytoskeleton. Its function is as follows. Involved in cytokinesis and septation where it has a role in the localization of F-actin. The polypeptide is Protein hob3 (hob3) (Schizosaccharomyces pombe (strain 972 / ATCC 24843) (Fission yeast)).